We begin with the raw amino-acid sequence, 707 residues long: UvrABC system protein C (707 aa).

The 81-residue stretch at 14-94 folds into the GIY-YIG domain; the sequence is AEPGCYLMKD…IKKHRPRFNV (81 aa). The 36-residue stretch at 206–241 folds into the UVR domain; that stretch reads GELVERLRGRMAGAAEGLRFEEAARLRDQLQAVERS. Positions 655-707 are disordered; the sequence is DAPPIAADEPSGAPAGAPGGGPAEASPEAVAAATEAEIDAALADEDASPEPAA. Composition is skewed to low complexity over residues 660–670 and 677–689; these read AADEPSGAPAG and AEAS…AATE. Residues 690-707 show a composition bias toward acidic residues; it reads AEIDAALADEDASPEPAA.

Belongs to the UvrC family. In terms of assembly, interacts with UvrB in an incision complex.

It is found in the cytoplasm. The UvrABC repair system catalyzes the recognition and processing of DNA lesions. UvrC both incises the 5' and 3' sides of the lesion. The N-terminal half is responsible for the 3' incision and the C-terminal half is responsible for the 5' incision. This Anaeromyxobacter dehalogenans (strain 2CP-1 / ATCC BAA-258) protein is UvrABC system protein C.